The chain runs to 244 residues: tRNA (guanine-N(1)-)-methyltransferase (244 aa).

S-adenosyl-L-methionine contacts are provided by residues Gly-112 and 131–136 (IGDFIV).

This sequence belongs to the RNA methyltransferase TrmD family. As to quaternary structure, homodimer.

The protein resides in the cytoplasm. It catalyses the reaction guanosine(37) in tRNA + S-adenosyl-L-methionine = N(1)-methylguanosine(37) in tRNA + S-adenosyl-L-homocysteine + H(+). Functionally, specifically methylates guanosine-37 in various tRNAs. The chain is tRNA (guanine-N(1)-)-methyltransferase from Clostridium kluyveri (strain NBRC 12016).